A 708-amino-acid polypeptide reads, in one-letter code: RNA-directed RNA polymerase catalytic subunit (708 aa).

The RdRp catalytic domain occupies 281-467 (RIKEIGMKNQ…GLNVSQKKSF (187 aa)).

As to quaternary structure, the RNA polymerase is composed of three subunits: PB1, PB2 and PA.

The catalysed reaction is RNA(n) + a ribonucleoside 5'-triphosphate = RNA(n+1) + diphosphate. Its function is as follows. RNA-dependent RNA polymerase which is responsible for replication and transcription of virus segments. Binds the promoter sequence of the encapsidated viral RNA. Displays an endonuclease activity involved in cap-stealing. Cleaves cellular pre-mRNA to generate primers for viral transcription. The protein is RNA-directed RNA polymerase catalytic subunit of Infectious salmon anemia virus (isolate Atlantic salmon/Norway/810/9/99) (ISAV).